The following is a 203-amino-acid chain: Secreted phosphoprotein 24 (203 aa).

Residues 1–23 (MEKMVMKMLVIFVFGMNHWTCTG) form the signal peptide. 2 disulfides stabilise this stretch: cysteine 86/cysteine 97 and cysteine 110/cysteine 128. Serine 90 carries the post-translational modification Phosphoserine. Serine 138, serine 139, serine 166, and serine 175 each carry phosphoserine. A disordered region spans residues 155-174 (NSHLLGLTPDRSRGEPLYER). A compositionally biased stretch (basic and acidic residues) spans 164–174 (DRSRGEPLYER).

It belongs to the SPP2 family. In terms of processing, multiply phosphorylated at serine residues. Post-translationally, phosphorylation sites are present in the extracellular medium.

Its subcellular location is the secreted. Functionally, could coordinate an aspect of bone turnover. The chain is Secreted phosphoprotein 24 (SPP2) from Ovis aries (Sheep).